Reading from the N-terminus, the 608-residue chain is Kinetochore protein NUF2 (608 aa).

The required for nuclear localization and function stretch occupies residues 121–125; sequence IGNLR. Coiled coils occupy residues 176–319 and 358–460; these read FESQ…QQKL and REKL…IEEE.

It belongs to the NUF2 family.

It is found in the chromosome. The protein localises to the centromere. It localises to the kinetochore. In terms of biological role, required for anchoring centrosomal cores to the nuclear periphery. Plays a role in chromosome segregation but is dispensable for centromere clustering. The polypeptide is Kinetochore protein NUF2 (Toxoplasma gondii (strain ATCC 50611 / Me49)).